The following is a 601-amino-acid chain: Probable N-acetylgalactosaminyltransferase 7 (601 aa).

At 1–20 (MIIARKKLQLQRLWRQRGCR) the chain is on the cytoplasmic side. The helical; Signal-anchor for type II membrane protein transmembrane segment at 21–38 (VATYICLGVLVLFGFVYN) threads the bilayer. The Lumenal segment spans residues 39–601 (SKGNSMSSIK…FVWKEFYQSS (563 aa)). A disordered region spans residues 61–108 (DLTNKELPGGPDPNTIFRGSELGNYEPKEPEIPSNQPGEHGKPVPVTD). N-linked (GlcNAc...) asparagine glycosylation occurs at asparagine 135. Intrachain disulfides connect cysteine 146/cysteine 382, cysteine 373/cysteine 452, cysteine 490/cysteine 506, cysteine 529/cysteine 542, and cysteine 568/cysteine 583. Residues 155-265 (LPTVSVVVVF…TNWLPPLLAP (111 aa)) form a catalytic subdomain A region. Substrate-binding residues include aspartate 196 and arginine 226. Mn(2+)-binding residues include aspartate 249 and histidine 251. The segment at 328 to 390 (PFRSPTHAGG…PCSHVGHVYR (63 aa)) is catalytic subdomain B. Position 359 (tryptophan 359) interacts with substrate. A Mn(2+)-binding site is contributed by histidine 387. The substrate site is built by arginine 390 and tyrosine 395. The Ricin B-type lectin domain occupies 477-595 (DVWGEARNPA…DNERQKFVWK (119 aa)).

Belongs to the glycosyltransferase 2 family. GalNAc-T subfamily. Mn(2+) is required as a cofactor.

The protein localises to the golgi apparatus membrane. Its pathway is protein modification; protein glycosylation. Functionally, probable glycopeptide transferase involved in O-linked oligosaccharide biosynthesis. Glycopeptide transferases catalyze the transfer of an N-acetyl-D-galactosamine residue to an already glycosylated peptide. In contrast to other members of the family, it does not act as a peptide transferase that transfers GalNAc onto serine or threonine residue on peptides that have been tested. Some peptide transferase activity is however not excluded, considering that its appropriate peptide substrate may remain unidentified. In Caenorhabditis elegans, this protein is Probable N-acetylgalactosaminyltransferase 7 (gly-7).